A 161-amino-acid polypeptide reads, in one-letter code: Putative outer membrane protein YedS (161 aa).

Positions 1–21 (MKRKVLAMLVPALLVAGAANA) are cleaved as a signal peptide.

It belongs to the Gram-negative porin family.

It localises to the cell outer membrane. In Escherichia coli (strain K12), this protein is Putative outer membrane protein YedS (yedS).